Consider the following 492-residue polypeptide: Solute carrier family 2, facilitated glucose transporter member 1 (492 aa).

At Met-1 the chain carries N-acetylmethionine. Residues 1–11 (MEPSSKKLTGR) are Cytoplasmic-facing. The chain crosses the membrane as a helical span at residues 12-33 (LMLAVGGAVLGSLQFGYNTGVI). Topologically, residues 34 to 66 (NAPQKVIEEFYNQTWLHRYGESISPATLTTLWS) are extracellular. Residue Asn-45 is glycosylated (N-linked (GlcNAc...) asparagine). The helical transmembrane segment at 67–87 (LSVAIFSVGGMIGSFSVGLFV) threads the bilayer. The Cytoplasmic portion of the chain corresponds to 88–90 (NRF). The helical transmembrane segment at 91 to 112 (GRRNSMLMMNLLAFISAVLMGF) threads the bilayer. At 113 to 120 (SKLGKSFE) the chain is on the extracellular side. The chain crosses the membrane as a helical span at residues 121–144 (MLILGRFIIGVYCGLTTGFVPMYV). Over 145-155 (GEVSPTALRGA) the chain is Cytoplasmic. A helical transmembrane segment spans residues 156-176 (LGTLHQLGIVVGILIAQVFGL). Gln-161 contributes to the D-glucose binding site. The Extracellular portion of the chain corresponds to 177–185 (DSIMGNEEL). The helical transmembrane segment at 186–206 (WPLLLSVIFIPALLQCVLLPF) threads the bilayer. The Cytoplasmic segment spans residues 207–271 (CPESPRFLLI…LFRSAAYRQP (65 aa)). Position 226 is a phosphoserine (Ser-226). The chain crosses the membrane as a helical span at residues 272-293 (ILIAVVLQLSQQLSGINAVFYY). D-glucose-binding positions include 282 to 283 (QQ) and Asn-288. Residues 294-306 (STSIFEKAGVQQP) lie on the Extracellular side of the membrane. The chain crosses the membrane as a helical span at residues 307 to 328 (VYATIGSGIVNTAFTVVSLFVV). Asn-317 lines the D-glucose pocket. Over 329–334 (ERAGRR) the chain is Cytoplasmic. The helical transmembrane segment at 335–355 (TLHLIGLAGMAGCAVLMTIAL) threads the bilayer. Over 356–365 (ALLEQLPWMS) the chain is Extracellular. A helical membrane pass occupies residues 366–388 (YLSIVAIFGFVAFFEVGPGPIPW). D-glucose is bound by residues Glu-380 and Trp-388. Residues 389-401 (FIVAELFSQGPRP) lie on the Cytoplasmic side of the membrane. A helical membrane pass occupies residues 402–422 (AAIAVAGFSNWTSNFIVGMCF). Over 423-429 (QYVEQLC) the chain is Extracellular. The helical transmembrane segment at 430–450 (GPYVFIIFTVLLVLFFIFTYF) threads the bilayer. At Ser-465 the chain carries Phosphoserine. The tract at residues 468 to 492 (RQGGASQSDKTPEELFHPLGADSQV) is disordered. A Phosphothreonine modification is found at Thr-478. A Phosphoserine modification is found at Ser-490.

It belongs to the major facilitator superfamily. Sugar transporter (TC 2.A.1.1) family. Glucose transporter subfamily. Found in a complex with ADD2, DMTN and SLC2A1. Interacts (via C-terminus cytoplasmic region) with DMTN. Interacts with SNX27; the interaction is required when endocytosed to prevent degradation in lysosomes and promote recycling to the plasma membrane. Interacts with GIPC (via PDZ domain). Interacts with STOM. Interacts with SGTA (via Gln-rich region). Interacts with BSG. Interacts with SMIM43; the interaction may promote SLC2A1-mediated glucose transport to meet the energy needs of mesendoderm differentiation. Phosphorylation at Ser-226 by PKC promotes glucose uptake by increasing cell membrane localization.

Its subcellular location is the cell membrane. The protein resides in the photoreceptor inner segment. It catalyses the reaction D-glucose(out) = D-glucose(in). With respect to regulation, the uptake of glucose is inhibited by cytochalasin B. Glucose uptake is increased in response to phorbol ester 12-O-tetradecanoylphorbol-13-acetate (TPA) treatment: TPA-induced glucose uptake requires phosphorylation at Ser-226. In terms of biological role, facilitative glucose transporter, which is responsible for constitutive or basal glucose uptake. Has a very broad substrate specificity; can transport a wide range of aldoses including both pentoses and hexoses. Most important energy carrier of the brain: present at the blood-brain barrier and assures the energy-independent, facilitative transport of glucose into the brain. In association with BSG and NXNL1, promotes retinal cone survival by increasing glucose uptake into photoreceptors. Required for mesendoderm differentiation. The protein is Solute carrier family 2, facilitated glucose transporter member 1 of Sus scrofa (Pig).